The primary structure comprises 973 residues: Piwi-like protein 2 (973 aa).

The disordered stretch occupies residues 28–65 (WPQASKPLDPALGRGAPAGRGHVFGKPEEPSTQRGPAQ). The span at 34–48 (PLDPALGRGAPAGRG) shows a compositional bias: low complexity. R47 is subject to Symmetric dimethylarginine. Residues R76 and R97 each carry the omega-N-methylarginine; by PRMT5; alternate modification. R76 is modified (symmetric dimethylarginine; by PRMT5; alternate). R97 is modified (symmetric dimethylarginine; alternate). Symmetric dimethylarginine; by PRMT5; alternate is present on R102. R102 bears the Omega-N-methylarginine; alternate mark. Symmetric dimethylarginine is present on residues R146 and R158. The disordered stretch occupies residues 162 to 199 (GISREVDKPPCTFSTPSRGPPQLSSPPALPQSPLHSPD). Position 165 is a symmetric dimethylarginine; by PRMT5 (R165). The PAZ domain occupies 389–502 (CVLDVMHAIY…LLPELSFMTG (114 aa)). R551 is subject to Symmetric dimethylarginine; by PRMT5. Residues 668–959 (MVVCIIMGPR…LAFLSGHILH (292 aa)) form the Piwi domain. Active-site residues include D745, E783, D815, and H948.

The protein belongs to the argonaute family. Piwi subfamily. In terms of assembly, interacts with DDX4, MAEL, EIF3A, EIF4E, EIF4G, PRMT5 and WDR77. Associates with EIF4E- and EIF4G-containing m7G cap-binding complexes. Interacts (when methylated on arginine residues) with TDRD1 and TDRKH/TDRD2. Interacts with TDRD12. Component of the PET complex, at least composed of EXD1, PIWIL2, TDRD12 and piRNAs. Interacts with MOV10L1. Interacts with GPAT2. Interacts with TEX19. Interacts with GSK3B. Interacts (via PIWI domain) with BMAL1 and CLOCK. Interacts with TEX15. The cofactor is Mg(2+). Arginine methylation by PRMT5 is required for the interaction with Tudor domain-containing protein TDRD1 and subsequent localization to the meiotic nuage, also named P granule. As to expression, expressed in adult testis and in most tumors.

The protein resides in the cytoplasm. Functionally, endoribonuclease that plays a central role during spermatogenesis by repressing transposable elements and preventing their mobilization, which is essential for the germline integrity. Plays an essential role in meiotic differentiation of spermatocytes, germ cell differentiation and in self-renewal of spermatogonial stem cells. Acts via the piRNA metabolic process, which mediates the repression of transposable elements during meiosis by forming complexes composed of piRNAs and Piwi proteins and govern the methylation and subsequent repression of transposons. During piRNA biosynthesis, plays a key role in the piRNA amplification loop, also named ping-pong amplification cycle, by acting as a 'slicer-competent' piRNA endoribonuclease that cleaves primary piRNAs, which are then loaded onto 'slicer-incompetent' PIWIL4. PIWIL2 slicing produces a pre-miRNA intermediate, which is then processed in mature piRNAs, and as well as a 16 nucleotide by-product that is degraded. Required for PIWIL4/MIWI2 nuclear localization and association with secondary piRNAs antisense. Besides their function in transposable elements repression, piRNAs are probably involved in other processes during meiosis such as translation regulation. Indirectly modulates expression of genes such as PDGFRB, SLC2A1, ITGA6, GJA7, THY1, CD9 and STRA8. When overexpressed, acts as an oncogene by inhibition of apoptosis and promotion of proliferation in tumors. Represses circadian rhythms by promoting the stability and activity of core clock components BMAL1 and CLOCK by inhibiting GSK3B-mediated phosphorylation and ubiquitination-dependent degradation of these proteins. In Homo sapiens (Human), this protein is Piwi-like protein 2 (PIWIL2).